The sequence spans 185 residues: Elongation factor P (185 aa).

Belongs to the elongation factor P family.

The protein resides in the cytoplasm. The protein operates within protein biosynthesis; polypeptide chain elongation. Involved in peptide bond synthesis. Stimulates efficient translation and peptide-bond synthesis on native or reconstituted 70S ribosomes in vitro. Probably functions indirectly by altering the affinity of the ribosome for aminoacyl-tRNA, thus increasing their reactivity as acceptors for peptidyl transferase. This Thermosipho africanus (strain TCF52B) protein is Elongation factor P.